An 83-amino-acid polypeptide reads, in one-letter code: NAD(P)H-quinone oxidoreductase subunit L (83 aa).

Transmembrane regions (helical) follow at residues 18 to 38 (IGGY…LLFF) and 53 to 73 (FSVY…APFL).

It belongs to the complex I NdhL subunit family. NDH-1 can be composed of about 15 different subunits; different subcomplexes with different compositions have been identified which probably have different functions.

The protein resides in the cellular thylakoid membrane. The enzyme catalyses a plastoquinone + NADH + (n+1) H(+)(in) = a plastoquinol + NAD(+) + n H(+)(out). The catalysed reaction is a plastoquinone + NADPH + (n+1) H(+)(in) = a plastoquinol + NADP(+) + n H(+)(out). Functionally, NDH-1 shuttles electrons from an unknown electron donor, via FMN and iron-sulfur (Fe-S) centers, to quinones in the respiratory and/or the photosynthetic chain. The immediate electron acceptor for the enzyme in this species is believed to be plastoquinone. Couples the redox reaction to proton translocation, and thus conserves the redox energy in a proton gradient. Cyanobacterial NDH-1 also plays a role in inorganic carbon-concentration. In Synechococcus sp. (strain CC9311), this protein is NAD(P)H-quinone oxidoreductase subunit L.